Reading from the N-terminus, the 480-residue chain is Endoplasmic reticulum lectin 1 (480 aa).

The signal sequence occupies residues 1 to 27 (MRRSDRFPCAGASLLVVLCGVFPSSFG). MRH domains lie at 108 to 245 (SSCS…LCNH) and 339 to 466 (SYCF…ICKI). The cysteines at positions 110 and 123 are disulfide-linked. The interval 152-172 (VKKSPSEAGENQEDKERTEGH) is disordered. The span at 163-172 (QEDKERTEGH) shows a compositional bias: basic and acidic residues. 5 disulfide bridges follow: Cys-198–Cys-231, Cys-214–Cys-243, Cys-341–Cys-354, Cys-418–Cys-452, and Cys-433–Cys-464.

The protein resides in the endoplasmic reticulum lumen. In terms of biological role, probable lectin that binds selectively to improperly folded lumenal proteins. May function in endoplasmic reticulum quality control and endoplasmic reticulum-associated degradation (ERAD) of both non-glycosylated proteins and glycoproteins. This chain is Endoplasmic reticulum lectin 1 (erlec1), found in Xenopus laevis (African clawed frog).